The following is a 205-amino-acid chain: MSAYRKGNIFIISAASGTGKTTLVSRLLANHNGLRVSVSHTTRPPREGEANGVHYHFVSKEEFESLIAQEAFLEYADVFGNYYGTSAEGVNALAAAGYDVILEIDVQGAAQVRDALPEAVGIFILPPSFDVLAARLNGRGTDSREVIQRRLSKARHEIEQSVLFDFVVVNDDLARAEEDLRHIVNACRLKRSRQLGFIADLLENS.

The region spanning 7–185 is the Guanylate kinase-like domain; sequence GNIFIISAAS…AEEDLRHIVN (179 aa). 14–21 contributes to the ATP binding site; the sequence is AASGTGKT.

Belongs to the guanylate kinase family.

It localises to the cytoplasm. It catalyses the reaction GMP + ATP = GDP + ADP. Functionally, essential for recycling GMP and indirectly, cGMP. This chain is Guanylate kinase (gmk), found in Neisseria meningitidis serogroup A / serotype 4A (strain DSM 15465 / Z2491).